We begin with the raw amino-acid sequence, 82 residues long: Small ribosomal subunit protein bS18 (82 aa).

The span at Met1–Arg10 shows a compositional bias: polar residues. The tract at residues Met1 to Pro21 is disordered.

This sequence belongs to the bacterial ribosomal protein bS18 family. As to quaternary structure, part of the 30S ribosomal subunit. Forms a tight heterodimer with protein bS6.

Binds as a heterodimer with protein bS6 to the central domain of the 16S rRNA, where it helps stabilize the platform of the 30S subunit. The polypeptide is Small ribosomal subunit protein bS18 (Bartonella tribocorum (strain CIP 105476 / IBS 506)).